We begin with the raw amino-acid sequence, 166 residues long: Interferon gamma (166 aa).

Positions 1-23 (MKYTSYILAFQLCIVLGSLGCYC) are cleaved as a signal peptide. A Pyrrolidone carboxylic acid modification is found at Gln24. A glycan (N-linked (GlcNAc...) asparagine) is linked at Asn48. A glycan (N-linked (GlcNAc...) asparagine; in dimeric form) is linked at Asn120. Positions 147–166 (AKTGKRKRSQMLFRGRRASQ) are disordered. Residues 149–166 (TGKRKRSQMLFRGRRASQ) show a composition bias toward basic residues. Residues 162-166 (RRASQ) constitute a propeptide that is removed on maturation.

The protein belongs to the type II (or gamma) interferon family. Homodimer. Interacts with IFNGR1 (via extracellular domain); this interaction promotes IFNGR1 dimerization. Proteolytic processing produces C-terminal heterogeneity, with proteins ending alternatively at Gly-150, Met-157 or Gly-161. In terms of tissue distribution, released primarily from activated T lymphocytes.

It is found in the secreted. Its function is as follows. Type II interferon produced by immune cells such as T-cells and NK cells that plays crucial roles in antimicrobial, antiviral, and antitumor responses by activating effector immune cells and enhancing antigen presentation. Primarily signals through the JAK-STAT pathway after interaction with its receptor IFNGR1 to affect gene regulation. Upon IFNG binding, IFNGR1 intracellular domain opens out to allow association of downstream signaling components JAK2, JAK1 and STAT1, leading to STAT1 activation, nuclear translocation and transcription of IFNG-regulated genes. Many of the induced genes are transcription factors such as IRF1 that are able to further drive regulation of a next wave of transcription. Plays a role in class I antigen presentation pathway by inducing a replacement of catalytic proteasome subunits with immunoproteasome subunits. In turn, increases the quantity, quality, and repertoire of peptides for class I MHC loading. Increases the efficiency of peptide generation also by inducing the expression of activator PA28 that associates with the proteasome and alters its proteolytic cleavage preference. Up-regulates as well MHC II complexes on the cell surface by promoting expression of several key molecules such as cathepsins B/CTSB, H/CTSH, and L/CTSL. Participates in the regulation of hematopoietic stem cells during development and under homeostatic conditions by affecting their development, quiescence, and differentiation. The chain is Interferon gamma (IFNG) from Homo sapiens (Human).